Here is a 574-residue protein sequence, read N- to C-terminus: Uric acid-xanthine permease (574 aa).

The tract at residues Met1 to Pro20 is disordered. The next 12 membrane-spanning stretches (helical) occupy residues Leu77–Pro97, Leu111–Ile131, Tyr141–Ala161, Ala188–Val209, Ile217–Thr237, Leu264–Leu284, Cys296–Phe315, Val338–Val361, Cys427–Ile447, Val451–Val471, Phe482–Gly502, and Leu522–Met542. Residues Met555–Ala574 form a disordered region. A Glycyl lysine isopeptide (Lys-Gly) (interchain with G-Cter in ubiquitin) cross-link involves residue Lys572.

It belongs to the nucleobase:cation symporter-2 (NCS2) (TC 2.A.40) family. Post-translationally, ubiquitinated by hulA. Ubiquitination leads to internalization, sorting into the endosomal pathway to the vacuolar lumen where uapA is eventually degraded.

Its subcellular location is the cell membrane. Uric acid-xanthine transporter. This Emericella nidulans (strain FGSC A4 / ATCC 38163 / CBS 112.46 / NRRL 194 / M139) (Aspergillus nidulans) protein is Uric acid-xanthine permease (uapA).